A 327-amino-acid chain; its full sequence is Altered inheritance rate of mitochondria protein 25 (327 aa).

It belongs to the phospholipid scramblase family.

The protein resides in the mitochondrion. This chain is Altered inheritance rate of mitochondria protein 25 (AIM25), found in Saccharomyces cerevisiae (strain ATCC 204508 / S288c) (Baker's yeast).